The sequence spans 309 residues: Porphobilinogen deaminase (309 aa).

The residue at position 242 (Cys-242) is an S-(dipyrrolylmethanemethyl)cysteine.

This sequence belongs to the HMBS family. Monomer. Dipyrromethane serves as cofactor.

It catalyses the reaction 4 porphobilinogen + H2O = hydroxymethylbilane + 4 NH4(+). Its pathway is porphyrin-containing compound metabolism; protoporphyrin-IX biosynthesis; coproporphyrinogen-III from 5-aminolevulinate: step 2/4. Tetrapolymerization of the monopyrrole PBG into the hydroxymethylbilane pre-uroporphyrinogen in several discrete steps. The chain is Porphobilinogen deaminase from Actinobacillus succinogenes (strain ATCC 55618 / DSM 22257 / CCUG 43843 / 130Z).